A 744-amino-acid chain; its full sequence is Merozoite surface protein 9 (744 aa).

A signal peptide spans 1–23 (MMNMKIVLFSLLLFVIRWNIISC). The segment at 77 to 235 (KELLKEKQYT…VNDEDDVNDE (159 aa)) is interaction with MSP1 and host SLC4A1/Band 3. Disordered regions lie at residues 202-282 (KSQG…ATAY), 459-487 (DNQAVDTKSMEEPKVKAQPALRGVEPTED), 512-540 (NNTPNVVPPTQSKKKNKNETVSGMDENFD), and 666-744 (VDAL…EESK). A compositionally biased stretch (polar residues) spans 211-224 (SQNQNENNDNQKYQ). 8 tandem repeats follow at residues 226–231 (VNDEDD), 232–237 (VNDEED), 238–243 (TNDDED), 244–249 (TNDEED), 250–255 (TNDDED), 256–261 (TNDDED), 262–267 (TNDEED), and 268–273 (TNDEED). Positions 226–273 (VNDEDDVNDEEDTNDDEDTNDEEDTNDDEDTNDDEDTNDEEDTNDEED) are 8 X 6 AA tandem repeats of [VT]-N-D-[ED]-[ED]-D. The span at 226 to 274 (VNDEDDVNDEEDTNDDEDTNDEEDTNDDEDTNDDEDTNDEEDTNDEEDH) shows a compositional bias: acidic residues. Positions 364-528 (LKDNLINYEF…PPTQSKKKNK (165 aa)) are interaction with MSP1 and host SLC4A1/Band 3. Basic and acidic residues predominate over residues 459-473 (DNQAVDTKSMEEPKV). Positions 512–521 (NNTPNVVPPT) are enriched in low complexity. Positions 644–734 (NQETEEEMEK…QEEEEEEEIV (91 aa)) form a coiled coil. Composition is skewed to basic and acidic residues over residues 672–698 (KNKEEEEKEKEKEKEKEEKEKEEKEKE) and 706–719 (EKEKEKEEKEKEEK). Residues 720 to 734 (EKEEEQEEEEEEEIV) are compositionally biased toward acidic residues.

This sequence belongs to the plasmodium ABRA family. Forms a complex composed of MSP1, MSP6, MSP7, MSP9 and MSP3; within the complex, MSP6 and MSP9 mediate the binding to the host erythrocyte. Interacts with MSP1 subunits p19 and p42; the interaction is direct. Interacts with host SLC4A1/Band 3 protein (via the 5ABC region). MSP1 subunits p19 or p42, and MSP9 form a co-ligand complex that interacts with host SLC4A1/Band 3 protein. In terms of processing, not glycosylated.

Its subcellular location is the cell membrane. It is found in the parasitophorous vacuole lumen. The protein localises to the secreted. Its function is as follows. During the asexual blood stage, involved in the sialic acid-independent (SAID) merozoite invasion of host erythrocytes by binding to host SLC4A1/Band 3 protein on the surface of the host erythrocyte. This chain is Merozoite surface protein 9, found in Plasmodium falciparum (isolate 7G8).